Consider the following 340-residue polypeptide: Glycerol-3-phosphate dehydrogenase [NAD(P)+] (340 aa).

The NADPH site is built by S15, Y16, H36, and K110. Sn-glycerol 3-phosphate-binding residues include K110, G139, and T141. A143 lines the NADPH pocket. Residues K196, D249, S259, R260, and N261 each contribute to the sn-glycerol 3-phosphate site. K196 serves as the catalytic Proton acceptor. R260 provides a ligand contact to NADPH. NADPH contacts are provided by V284 and E286.

The protein belongs to the NAD-dependent glycerol-3-phosphate dehydrogenase family.

It localises to the cytoplasm. It catalyses the reaction sn-glycerol 3-phosphate + NAD(+) = dihydroxyacetone phosphate + NADH + H(+). The enzyme catalyses sn-glycerol 3-phosphate + NADP(+) = dihydroxyacetone phosphate + NADPH + H(+). Its pathway is membrane lipid metabolism; glycerophospholipid metabolism. Catalyzes the reduction of the glycolytic intermediate dihydroxyacetone phosphate (DHAP) to sn-glycerol 3-phosphate (G3P), the key precursor for phospholipid synthesis. The protein is Glycerol-3-phosphate dehydrogenase [NAD(P)+] of Serratia marcescens.